A 190-amino-acid polypeptide reads, in one-letter code: High affinity copper uptake protein 1 (190 aa).

Positions 1–35 (MDHSHHMGMSYMDSNSTMQPSHHHPTTSASHSHGG) are disordered. Residues 1–61 (MDHSHHMGMS…KNVELLFSGL (61 aa)) are Extracellular-facing. Positions 5 to 6 (HH) match the Bis-His motif motif. The Methionine segments (Mets) motif motif lies at 7 to 12 (MGMSYM). A glycan (N-linked (GlcNAc...) asparagine) is linked at Asn15. Residues 26-35 (TTSASHSHGG) are compositionally biased toward low complexity. An O-linked (GalNAc...) threonine glycan is attached at Thr27. Residues 62–82 (VINTAGEMAGAFVAVFLLAMF) form a helical membrane-spanning segment. Over 83–132 (YEGLKIARESLLRKSQVSIRYNSMPVPGPNGTILMETHKTVGQQMLSFPH) the chain is Cytoplasmic. Residue Thr114 is modified to Phosphothreonine. A helical transmembrane segment spans residues 133-153 (LLQTVLHIIQVVISYFLMLIF). The Extracellular segment spans residues 154 to 156 (MTY). A helical membrane pass occupies residues 157–177 (NGYLCIAVAAGAGTGYFLFSW). At 178-190 (KKAVVVDITEHCH) the chain is on the cytoplasmic side. Cys189 carries the cysteine sulfenic acid (-SOH) modification.

It belongs to the copper transporter (Ctr) (TC 1.A.56) family. SLC31A subfamily. Homotrimer; is stabilized by cisplatin via interactions between cisplatin and the methionine-rich clusters, and could be crucial for the copper(2+) reduction process and copper(1+) stabilization. Heterotrimer between SLC31A1, CCS and SOD1; this heterotrimer is copper(1+)-mediated and its maintenance is regulated through SOD1 activation. Interacts with KDR; this interaction is induced upon VEGFA stimulation leading to SLC31A1 and KDR subsequent co-internalization to early endosomes, thereby activating KDR downstream signaling in endothelial cells. Interacts (via C-terminal domain) with ATOX1 (via dimer form); this interaction improves ATOX1 stability and controls intracellular copper(1+) levels. Interacts with SLC31A2; this interaction stabilizes SLC31A2 and protects its from ubiquitination and degradation. Interacts (via C-terminal domain) with CCS; this interaction is copper(1+)-mediated. In terms of processing, O-Glycosylation at Thr-27 protects from proteolytic cleavage in the N-terminal extracellular domain. Post-translationally, proteolytic cleavage, leading to a truncated form, is facilitated by SLC31A2 and initiated preferentially by CTSL and to a minor extend by CTSB in endolysosomal compartments. In vitro, is cleaved by CTSL/cathepsin L between residues 8 and 9 from the amino terminus. A post-CTSL/cathepsin L processing occurs to yield to the fully truncated form. Sulfenylated at Cys-189 after stimulation with VEGFA, which induces SLC31A1-KDR disulfide bond formation and their co-internalization to early endosomes, driving to a sustained VEGFR2 signaling.

It is found in the cell membrane. The protein resides in the early endosome membrane. Its subcellular location is the recycling endosome membrane. It localises to the apical cell membrane. The protein localises to the late endosome membrane. It is found in the basolateral cell membrane. It catalyses the reaction Ag(+)(out) = Ag(+)(in). The catalysed reaction is Cu(+)(out) = Cu(+)(in). Its activity is regulated as follows. Copper(1+) transport is stimulated by extracellular acidic pH and high potassium ions concentrations. Copper(1+) import is regulated by a copper(1+)-dependent recycling of SLC31A1. Uniporter that mediates the transport of copper(1+) from the extracellular space to the cytoplasm, across the plasma membrane and delivers directly copper(1+) to specific chaperone such as ATOX1, via a copper(1+)- mediated transient interaction between the C-terminal domain and a copper(1+) chaperone, thus controlling intracellular copper(1+) levels. May function in copper(1+) import from the apical membrane thus may drive intestinal copper absorption. The copper(1+) transport mechanism is sodium-independent, saturable and of high-affinity. Also mediates the uptake of silver(1+). May function in the influx of the platinum-containing chemotherapeutic agents. The platinum-containing chemotherapeutic agents uptake is saturable. In vitro, mediates the transport of cadmium(2+) into cells. Also participates in the first step of copper(2+) acquisition by cells through a direct transfer of copper(2+) from copper(2+) carriers in blood, such as ALB to the N-terminal domain of SLC31A1, leading to copper(2+) reduction and probably followed by copper(1+) stabilization. In addition, functions as a redox sensor to promote angiogenesis in endothelial cells, in a copper(1+) transport independent manner, by transmitting the VEGF-induced ROS signal through a sulfenylation at Cys-189 leadin g to a subsequent disulfide bond formation between SLC31A1 and KDR. The SLC31A1-KDR complex is then co-internalized to early endosomes, driving a sustained VEGFR2 signaling. In terms of biological role, mobilizes copper(1+) out of the endosomal compartment, making copper(1+) available for export out of the cells. The protein is High affinity copper uptake protein 1 of Homo sapiens (Human).